Reading from the N-terminus, the 762-residue chain is 5-methyltetrahydropteroyltriglutamate--homocysteine methyltransferase (762 aa).

Residues arginine 17 to lysine 20 and lysine 111 each bind 5-methyltetrahydropteroyltri-L-glutamate. L-homocysteine contacts are provided by residues isoleucine 435–serine 437 and glutamate 488. Residues isoleucine 435 to serine 437 and glutamate 488 contribute to the L-methionine site. 5-methyltetrahydropteroyltri-L-glutamate contacts are provided by residues arginine 519–cysteine 520 and tryptophan 565. L-homocysteine is bound at residue aspartate 603. Aspartate 603 lines the L-methionine pocket. Glutamate 609 provides a ligand contact to 5-methyltetrahydropteroyltri-L-glutamate. Histidine 645, cysteine 647, and glutamate 669 together coordinate Zn(2+). Catalysis depends on histidine 698, which acts as the Proton donor. Cysteine 730 lines the Zn(2+) pocket.

The protein belongs to the vitamin-B12 independent methionine synthase family. Requires Zn(2+) as cofactor.

The enzyme catalyses 5-methyltetrahydropteroyltri-L-glutamate + L-homocysteine = tetrahydropteroyltri-L-glutamate + L-methionine. It functions in the pathway amino-acid biosynthesis; L-methionine biosynthesis via de novo pathway; L-methionine from L-homocysteine (MetE route): step 1/1. Functionally, catalyzes the transfer of a methyl group from 5-methyltetrahydrofolate to homocysteine resulting in methionine formation. The protein is 5-methyltetrahydropteroyltriglutamate--homocysteine methyltransferase of Bacillus mycoides (strain KBAB4) (Bacillus weihenstephanensis).